A 197-amino-acid chain; its full sequence is Outer-membrane lipoprotein LolB (197 aa).

Positions 1-20 (MNRSRRLALFCLGAPLLLQA) are cleaved as a signal peptide. The N-palmitoyl cysteine moiety is linked to residue Cys21. Cys21 carries S-diacylglycerol cysteine lipidation.

Belongs to the LolB family. In terms of assembly, monomer.

The protein localises to the cell outer membrane. In terms of biological role, plays a critical role in the incorporation of lipoproteins in the outer membrane after they are released by the LolA protein. The sequence is that of Outer-membrane lipoprotein LolB from Cupriavidus necator (strain ATCC 17699 / DSM 428 / KCTC 22496 / NCIMB 10442 / H16 / Stanier 337) (Ralstonia eutropha).